A 340-amino-acid polypeptide reads, in one-letter code: Phosphoribosylformylglycinamidine cyclo-ligase (340 aa).

It belongs to the AIR synthase family.

The protein localises to the cytoplasm. It carries out the reaction 2-formamido-N(1)-(5-O-phospho-beta-D-ribosyl)acetamidine + ATP = 5-amino-1-(5-phospho-beta-D-ribosyl)imidazole + ADP + phosphate + H(+). It participates in purine metabolism; IMP biosynthesis via de novo pathway; 5-amino-1-(5-phospho-D-ribosyl)imidazole from N(2)-formyl-N(1)-(5-phospho-D-ribosyl)glycinamide: step 2/2. This chain is Phosphoribosylformylglycinamidine cyclo-ligase, found in Streptococcus gordonii (strain Challis / ATCC 35105 / BCRC 15272 / CH1 / DL1 / V288).